The primary structure comprises 306 residues: N-acetylmuramic acid 6-phosphate etherase (306 aa).

Residues 59-222 (TAQALGRGGR…STGVMVCLGK (164 aa)) enclose the SIS domain. Residue E87 is the Proton donor of the active site. E118 is a catalytic residue.

The protein belongs to the GCKR-like family. MurNAc-6-P etherase subfamily. As to quaternary structure, homodimer.

The enzyme catalyses N-acetyl-D-muramate 6-phosphate + H2O = N-acetyl-D-glucosamine 6-phosphate + (R)-lactate. It functions in the pathway amino-sugar metabolism; N-acetylmuramate degradation. In terms of biological role, specifically catalyzes the cleavage of the D-lactyl ether substituent of MurNAc 6-phosphate, producing GlcNAc 6-phosphate and D-lactate. This Rippkaea orientalis (strain PCC 8801 / RF-1) (Cyanothece sp. (strain PCC 8801)) protein is N-acetylmuramic acid 6-phosphate etherase.